A 631-amino-acid polypeptide reads, in one-letter code: MKISWKNILLTLIPLGLISFLVWQGFNNTTNPQFTKNIASSRMTYGRFLEYLDLGWVKKVDLYDEGHTAIVEAIGPELGNRIQRIRVELPATAPELITKLRKANVDLDAHATNDSTPAWSLIGNLIFPILLIAGLAFLFRRSSNLPGGPGQAMNFGKSKARFQMEAKTGVTFNDVAGVDEAKEEFEEVVSFLKKPERFTAVGAKIPKGVLLVGPPGTGKTLLAKAIAGEAGVPFFSISGSEFVEMFVGVGASRVRDLFKKAKENSPCIVFIDEIDAVGRQRGTGIGGGNDEREQTLNQLLTEMDGFEGNTGIIIIAATNRVDVLDAALLRPGRFDRQVTVDVPDVKGRLEILNVHARNKKLDLSISLELIAKRTPGFSGADLANLLNEAAILTARRRKKQITISEIDASIDRVIAGMEGKALVDSKTKRLIAYHEVGHAIIGTLLKHHDPVQKVTLVPRGQAKGLTWFTPSEDQSLISRSQILARIMGALGGRAAEEVVFGLPEVTTGAGNDLQQVTSMARQMVTRFGMSNIGPLSLESQNSDPFLGRTMGSSSQYSEDIASRIDMQVRAIIQHCHTETVQIIKDNRVVIDKLVDLLIEKETIDGDEFRQIVGDFTSLPEKIDYKSQLKST.

At 1-2 (MK) the chain is on the stromal side. The helical transmembrane segment at 3–23 (ISWKNILLTLIPLGLISFLVW) threads the bilayer. Residues 24-118 (QGFNNTTNPQ…AHATNDSTPA (95 aa)) are Lumenal-facing. Residues 119-139 (WSLIGNLIFPILLIAGLAFLF) form a helical membrane-spanning segment. The Stromal portion of the chain corresponds to 140-631 (RRSSNLPGGP…IDYKSQLKST (492 aa)). 213 to 220 (GPPGTGKT) serves as a coordination point for ATP. H434 contacts Zn(2+). E435 is an active-site residue. 2 residues coordinate Zn(2+): H438 and D512.

This sequence in the central section; belongs to the AAA ATPase family. The protein in the C-terminal section; belongs to the peptidase M41 family. Homohexamer. The cofactor is Zn(2+).

It is found in the plastid. The protein localises to the chloroplast thylakoid membrane. Functionally, acts as a processive, ATP-dependent zinc metallopeptidase. This chain is ATP-dependent zinc metalloprotease FtsH, found in Guillardia theta (Cryptophyte).